We begin with the raw amino-acid sequence, 204 residues long: uncharacterized protein (204 aa).

Positions 109–136 (QFDIDVHKDQIEKLKDLYKALLRIAETT) form a coiled coil.

This is an uncharacterized protein from Bacillus subtilis (strain 168).